The sequence spans 215 residues: MPTPIRTILLDIEGTVGSISFVKNVLFPLAKQQYAEYVHKHMDDASVRVFGNSLDEIVDKLNTLHDSGSKDQAFKALQGSIWKDAYENGKVVAHLFPDVVPLLKRAADKGVRVCIYSSGSVPAQKLYFHYSEYGDLSNYISEYYDTSIGPKVEADSYKRIVGSDDPATWLFLSDNVHELDAARQSGLKVGLAVRPGNEPVSSSGYSEYGSFDSLL.

Mg(2+) is bound by residues aspartate 11 and glutamate 13. Substrate-binding positions include 117–118 and lysine 151; that span reads SS. Residue aspartate 174 participates in Mg(2+) binding.

This sequence belongs to the HAD-like hydrolase superfamily. MasA/MtnC family. Monomer. It depends on Mg(2+) as a cofactor.

The protein resides in the cytoplasm. It localises to the nucleus. It catalyses the reaction 5-methylsulfanyl-2,3-dioxopentyl phosphate + H2O = 1,2-dihydroxy-5-(methylsulfanyl)pent-1-en-3-one + phosphate. Its pathway is amino-acid biosynthesis; L-methionine biosynthesis via salvage pathway; L-methionine from S-methyl-5-thio-alpha-D-ribose 1-phosphate: step 3/6. The protein operates within amino-acid biosynthesis; L-methionine biosynthesis via salvage pathway; L-methionine from S-methyl-5-thio-alpha-D-ribose 1-phosphate: step 4/6. Its function is as follows. Bifunctional enzyme that catalyzes the enolization of 2,3-diketo-5-methylthiopentyl-1-phosphate (DK-MTP-1-P) into the intermediate 2-hydroxy-3-keto-5-methylthiopentenyl-1-phosphate (HK-MTPenyl-1-P), which is then dephosphorylated to form the acireductone 1,2-dihydroxy-3-keto-5-methylthiopentene (DHK-MTPene). The chain is Enolase-phosphatase E1 (utr4) from Schizosaccharomyces japonicus (strain yFS275 / FY16936) (Fission yeast).